Reading from the N-terminus, the 173-residue chain is Crossover junction endodeoxyribonuclease RuvC (173 aa).

Residues Asp8, Glu67, and Asp139 contribute to the active site. Asp8, Glu67, and Asp139 together coordinate Mg(2+).

The protein belongs to the RuvC family. As to quaternary structure, homodimer which binds Holliday junction (HJ) DNA. The HJ becomes 2-fold symmetrical on binding to RuvC with unstacked arms; it has a different conformation from HJ DNA in complex with RuvA. In the full resolvosome a probable DNA-RuvA(4)-RuvB(12)-RuvC(2) complex forms which resolves the HJ. Requires Mg(2+) as cofactor.

It localises to the cytoplasm. It carries out the reaction Endonucleolytic cleavage at a junction such as a reciprocal single-stranded crossover between two homologous DNA duplexes (Holliday junction).. The RuvA-RuvB-RuvC complex processes Holliday junction (HJ) DNA during genetic recombination and DNA repair. Endonuclease that resolves HJ intermediates. Cleaves cruciform DNA by making single-stranded nicks across the HJ at symmetrical positions within the homologous arms, yielding a 5'-phosphate and a 3'-hydroxyl group; requires a central core of homology in the junction. The consensus cleavage sequence is 5'-(A/T)TT(C/G)-3'. Cleavage occurs on the 3'-side of the TT dinucleotide at the point of strand exchange. HJ branch migration catalyzed by RuvA-RuvB allows RuvC to scan DNA until it finds its consensus sequence, where it cleaves and resolves the cruciform DNA. The sequence is that of Crossover junction endodeoxyribonuclease RuvC from Shewanella pealeana (strain ATCC 700345 / ANG-SQ1).